Here is a 212-residue protein sequence, read N- to C-terminus: NAD(P)H dehydrogenase (quinone) 3 (212 aa).

In terms of domain architecture, Flavodoxin-like spans 4–192; that stretch reads MLVLYYSSYG…DGARFQGRHV (189 aa). Residues 10–15 and 78–80 contribute to the FMN site; these read SSYGHI and TRF. Tyr12 provides a ligand contact to NAD(+). Trp98 lines the substrate pocket. FMN-binding positions include 113-119 and His134; that span reads STGSQHG. The disordered stretch occupies residues 161–182; the sequence is YGASTLAEDENHRDRSPSANEL.

This sequence belongs to the WrbA family. Requires FMN as cofactor.

It catalyses the reaction a quinone + NADH + H(+) = a quinol + NAD(+). The enzyme catalyses a quinone + NADPH + H(+) = a quinol + NADP(+). This Rhizobium meliloti (strain 1021) (Ensifer meliloti) protein is NAD(P)H dehydrogenase (quinone) 3.